The chain runs to 1018 residues: Putative type I restriction enzyme MjaVIIIP endonuclease subunit (1018 aa).

This sequence belongs to the HsdR family. In terms of assembly, the type I restriction/modification system is composed of three polypeptides R, M and S.

It carries out the reaction Endonucleolytic cleavage of DNA to give random double-stranded fragments with terminal 5'-phosphates, ATP is simultaneously hydrolyzed.. Functionally, the restriction (R) subunit of a type I restriction enzyme that recognizes 5'-GAYN(5)GTAA-3' and cleaves a random distance away. The R subunit is required for both endonuclease and ATPase activities but not for modification. After locating a non-methylated recognition site, the enzyme complex serves as a molecular motor that translocates DNA in an ATP-dependent manner until a collision occurs that triggers cleavage. In Methanocaldococcus jannaschii (strain ATCC 43067 / DSM 2661 / JAL-1 / JCM 10045 / NBRC 100440) (Methanococcus jannaschii), this protein is Putative type I restriction enzyme MjaVIIIP endonuclease subunit.